The primary structure comprises 409 residues: Tryptophan synthase beta chain (409 aa).

N6-(pyridoxal phosphate)lysine is present on Lys-100.

It belongs to the TrpB family. In terms of assembly, tetramer of two alpha and two beta chains. It depends on pyridoxal 5'-phosphate as a cofactor.

The enzyme catalyses (1S,2R)-1-C-(indol-3-yl)glycerol 3-phosphate + L-serine = D-glyceraldehyde 3-phosphate + L-tryptophan + H2O. Its pathway is amino-acid biosynthesis; L-tryptophan biosynthesis; L-tryptophan from chorismate: step 5/5. Functionally, the beta subunit is responsible for the synthesis of L-tryptophan from indole and L-serine. This Pyrobaculum arsenaticum (strain DSM 13514 / JCM 11321 / PZ6) protein is Tryptophan synthase beta chain.